The sequence spans 120 residues: Crustacean hyperglycemic hormones 1 (120 aa).

The N-terminal stretch at 1–27 is a signal peptide; it reads MTAFRMVWSMLLASLLMLLVASSTAPA. Intrachain disulfides connect Cys-53/Cys-89, Cys-69/Cys-85, and Cys-72/Cys-98. Valine amide is present on Val-118.

This sequence belongs to the arthropod CHH/MIH/GIH/VIH hormone family.

Its subcellular location is the secreted. Functionally, hormone found in the sinus gland of isopods and decapods which controls the blood sugar level. Has a secretagogue action over the amylase released from the midgut gland. May act as a stress hormone and may be involved in the control of molting and reproduction. The sequence is that of Crustacean hyperglycemic hormones 1 (CHH1) from Penaeus monodon (Giant tiger prawn).